Here is a 191-residue protein sequence, read N- to C-terminus: Putative 3-methyladenine DNA glycosylase (191 aa).

Belongs to the DNA glycosylase MPG family.

This Cutibacterium acnes (strain DSM 16379 / KPA171202) (Propionibacterium acnes) protein is Putative 3-methyladenine DNA glycosylase.